We begin with the raw amino-acid sequence, 744 residues long: Catalase-peroxidase 3 (744 aa).

Residues 106-228 (WHFAGTYRIG…LAASEMGLIY (123 aa)) constitute a cross-link (tryptophyl-tyrosyl-methioninium (Trp-Tyr) (with M-254)). Residue His-107 is the Proton acceptor of the active site. Residues 228-254 (YVDPQGPATLPDPLASARDIRETFRRM) constitute a cross-link (tryptophyl-tyrosyl-methioninium (Tyr-Met) (with W-106)). A heme b-binding site is contributed by His-269.

This sequence belongs to the peroxidase family. Peroxidase/catalase subfamily. In terms of assembly, homodimer or homotetramer. Heme b serves as cofactor. In terms of processing, formation of the three residue Trp-Tyr-Met cross-link is important for the catalase, but not the peroxidase activity of the enzyme.

The catalysed reaction is H2O2 + AH2 = A + 2 H2O. It carries out the reaction 2 H2O2 = O2 + 2 H2O. Bifunctional enzyme with both catalase and broad-spectrum peroxidase activity. This is Catalase-peroxidase 3 from Mycolicibacterium smegmatis (strain ATCC 700084 / mc(2)155) (Mycobacterium smegmatis).